A 153-amino-acid polypeptide reads, in one-letter code: Selenoprotein F (153 aa).

An N-terminal signal peptide occupies residues 1–19; sequence MAGEVYLLWLLPLLQGLAS. A non-standard amino acid (selenocysteine) is located at residue selenocysteine 84.

The protein belongs to the selenoprotein M/F family. As to expression, higher levels in polster, prechordal plate, axis, otic vesicle and somites. Lower levels in fin buds.

It is found in the endoplasmic reticulum lumen. In terms of biological role, may be involved in redox reactions associated with the formation of disulfide bonds. May contribute to the quality control of protein folding in the endoplasmic reticulum. The protein is Selenoprotein F of Danio rerio (Zebrafish).